A 524-amino-acid chain; its full sequence is 2-isopropylmalate synthase (524 aa).

In terms of domain architecture, Pyruvate carboxyltransferase spans 12–274 (VIIFDTTLRD…WNRIETTMLT (263 aa)). Residues aspartate 21, histidine 209, histidine 211, and asparagine 245 each coordinate Mn(2+). Residues 398–524 (KLMSLTVIAG…EDAPAVAVAG (127 aa)) form a regulatory domain region.

This sequence belongs to the alpha-IPM synthase/homocitrate synthase family. LeuA type 1 subfamily. Homodimer. The cofactor is Mn(2+).

It is found in the cytoplasm. The catalysed reaction is 3-methyl-2-oxobutanoate + acetyl-CoA + H2O = (2S)-2-isopropylmalate + CoA + H(+). Its pathway is amino-acid biosynthesis; L-leucine biosynthesis; L-leucine from 3-methyl-2-oxobutanoate: step 1/4. Catalyzes the condensation of the acetyl group of acetyl-CoA with 3-methyl-2-oxobutanoate (2-ketoisovalerate) to form 3-carboxy-3-hydroxy-4-methylpentanoate (2-isopropylmalate). The sequence is that of 2-isopropylmalate synthase from Rhodopseudomonas palustris (strain ATCC BAA-98 / CGA009).